A 233-amino-acid chain; its full sequence is Germin-like protein 3-7 (233 aa).

The N-terminal stretch at 1–35 (MSSSSSMECTGNMSAAPLLVLTVAVLAVLASTCAA) is a signal peptide. A disulfide bond links Cys44 and Cys63. The region spanning 77 to 225 (AGLAAAGSTD…SFQVDAEIIK (149 aa)) is the Cupin type-1 domain. Residues His125, His127, Glu132, and His171 each contribute to the Mn(2+) site. Residue Asn178 is glycosylated (N-linked (GlcNAc...) asparagine).

This sequence belongs to the germin family. Oligomer (believed to be a pentamer but probably hexamer).

The protein resides in the secreted. The protein localises to the extracellular space. It is found in the apoplast. Functionally, may play a role in plant defense. Probably has no oxalate oxidase activity even if the active site is conserved. The sequence is that of Germin-like protein 3-7 (GER7) from Oryza sativa subsp. japonica (Rice).